An 87-amino-acid polypeptide reads, in one-letter code: Diazepam-binding inhibitor-like 5 (87 aa).

The region spanning 2-87 (SQVEFEMACA…VEELKKKEPC (86 aa)) is the ACB domain. An acyl-CoA-binding positions include 29–33 (YSFYK), Lys55, and Tyr74.

The protein belongs to the ACBP family. Exclusively expressed in late spermatids and spermatozoa. Not found in epididymis, spleen, bone marrow, skin, liver, brain, heart, kidney, muscle.

It is found in the cytoplasm. May be involved in the energy metabolism of the mature sperm. This is Diazepam-binding inhibitor-like 5 (Dbil5) from Mus musculus (Mouse).